We begin with the raw amino-acid sequence, 186 residues long: Intraflagellar transport protein 27 homolog (186 aa).

Residues 12 to 19 (GDPAVGKT), 64 to 68 (DSAGK), and 123 to 126 (TKTD) contribute to the GTP site.

The protein belongs to the small GTPase superfamily. Rab family. As to quaternary structure, component of the IFT complex B, at least composed of IFT20, IFT22, IFT25, IFT27, IFT46, IFT52, TRAF3IP1/IFT54, IFT57, IFT74, IFT80, IFT81, and IFT88. Interacts with IFT25. Interacts with IFT70B. Interacts with RABL2/RABL2A; binding is equal in the presence of GTP or GDP. Interacts with IFT88. Interacts with ARL6; recognizes and binds with the GTP-free form of ARL6. In terms of tissue distribution, expressed predominantly in the testis (at protein level). Co-localizes with RABL2/RABL2A in the midpiece of elongated spermatids within the testis (at protein level).

The protein localises to the cell projection. Its subcellular location is the cilium. It is found in the cytoplasm. The protein resides in the flagellum. Small GTPase-like component of the intraflagellar transport (IFT) complex B that promotes the exit of the BBSome complex from cilia via its interaction with ARL6. Not involved in entry of the BBSome complex into cilium. Prevents aggregation of GTP-free ARL6. Required for hedgehog signaling. Forms a subcomplex within the IFT complex B with IFT25. Its role in intraflagellar transport is mainly seen in tissues rich in ciliated cells such as kidney and testis. Essential for male fertility, spermiogenesis and sperm flagella formation. Plays a role in the early development of the kidney. May be involved in the regulation of ureteric bud initiation. The chain is Intraflagellar transport protein 27 homolog (Ift27) from Mus musculus (Mouse).